The primary structure comprises 1412 residues: DNA-directed RNA polymerase subunit beta' (1412 aa).

Zn(2+) is bound by residues Cys70, Cys72, Cys85, and Cys88. Residues Asp460, Asp462, and Asp464 each contribute to the Mg(2+) site. Zn(2+) is bound by residues Cys819, Cys893, Cys900, and Cys903. A disordered region spans residues 1391–1412; the sequence is AEESFEFGTPETPAAEQQHSGE.

The protein belongs to the RNA polymerase beta' chain family. In terms of assembly, the RNAP catalytic core consists of 2 alpha, 1 beta, 1 beta' and 1 omega subunit. When a sigma factor is associated with the core the holoenzyme is formed, which can initiate transcription. Mg(2+) is required as a cofactor. Requires Zn(2+) as cofactor.

It carries out the reaction RNA(n) + a ribonucleoside 5'-triphosphate = RNA(n+1) + diphosphate. Its function is as follows. DNA-dependent RNA polymerase catalyzes the transcription of DNA into RNA using the four ribonucleoside triphosphates as substrates. The protein is DNA-directed RNA polymerase subunit beta' of Paraburkholderia phytofirmans (strain DSM 17436 / LMG 22146 / PsJN) (Burkholderia phytofirmans).